We begin with the raw amino-acid sequence, 149 residues long: Small ribosomal subunit protein eS19 (149 aa).

Belongs to the eukaryotic ribosomal protein eS19 family.

In Mya arenaria (Soft-shell clam), this protein is Small ribosomal subunit protein eS19 (RPS19).